A 133-amino-acid polypeptide reads, in one-letter code: Small ribosomal subunit protein uS8 (133 aa).

This sequence belongs to the universal ribosomal protein uS8 family. Part of the 30S ribosomal subunit.

One of the primary rRNA binding proteins, it binds directly to 16S rRNA central domain where it helps coordinate assembly of the platform of the 30S subunit. The protein is Small ribosomal subunit protein uS8 of Hyperthermus butylicus (strain DSM 5456 / JCM 9403 / PLM1-5).